A 270-amino-acid chain; its full sequence is Formamidopyrimidine-DNA glycosylase (270 aa).

Pro2 functions as the Schiff-base intermediate with DNA in the catalytic mechanism. Catalysis depends on Glu3, which acts as the Proton donor. Lys58 functions as the Proton donor; for beta-elimination activity in the catalytic mechanism. DNA-binding residues include His91, Arg110, and Arg151. Residues 236–270 (FVYGRGGQPCKVCGTELREVKLGQRASVYCPRCQR) form an FPG-type zinc finger. Arg260 acts as the Proton donor; for delta-elimination activity in catalysis.

Belongs to the FPG family. Monomer. The cofactor is Zn(2+).

The catalysed reaction is Hydrolysis of DNA containing ring-opened 7-methylguanine residues, releasing 2,6-diamino-4-hydroxy-5-(N-methyl)formamidopyrimidine.. It carries out the reaction 2'-deoxyribonucleotide-(2'-deoxyribose 5'-phosphate)-2'-deoxyribonucleotide-DNA = a 3'-end 2'-deoxyribonucleotide-(2,3-dehydro-2,3-deoxyribose 5'-phosphate)-DNA + a 5'-end 5'-phospho-2'-deoxyribonucleoside-DNA + H(+). Functionally, involved in base excision repair of DNA damaged by oxidation or by mutagenic agents. Acts as a DNA glycosylase that recognizes and removes damaged bases. Has a preference for oxidized purines, such as 7,8-dihydro-8-oxoguanine (8-oxoG). Has AP (apurinic/apyrimidinic) lyase activity and introduces nicks in the DNA strand. Cleaves the DNA backbone by beta-delta elimination to generate a single-strand break at the site of the removed base with both 3'- and 5'-phosphates. This chain is Formamidopyrimidine-DNA glycosylase, found in Pseudomonas putida (strain ATCC 700007 / DSM 6899 / JCM 31910 / BCRC 17059 / LMG 24140 / F1).